We begin with the raw amino-acid sequence, 637 residues long: Type II restriction enzyme and methyltransferase RM.BcgI (637 aa).

It in the C-terminal section; belongs to the N(4)/N(6)-methyltransferase family. Heterotrimer of two A and one B subunit. Both subunits are necessary for DNA-binding, which is sequence non-specific. The cofactor is Mg(2+).

The catalysed reaction is Endonucleolytic cleavage of DNA to give specific double-stranded fragments with terminal 5'-phosphates.. The enzyme catalyses a 2'-deoxyadenosine in DNA + S-adenosyl-L-methionine = an N(6)-methyl-2'-deoxyadenosine in DNA + S-adenosyl-L-homocysteine + H(+). Its activity is regulated as follows. DNA restriction requires S-adenosyl-L-methionine and Mg(2+), and is inhibited by S-adenosyl-homocysteine. SAM may be a cofactor for DNA restriction. A B, G, H and S subtype restriction enzyme that recognizes the double-stranded sequence 5'-CGAN(6)TGC-3' and cleaves bilaterally and symmetrically 10 base pairs upstream and 12 base pairs downstream of the sequence to release a 34-base pair fragment. Methylation of the recognition sequence occurs on the adenine in either one or both strands; seems to methylate restricted DNA. This subunit has no methylation or DNA restriction activity on its own. This Heyndrickxia coagulans (Weizmannia coagulans) protein is Type II restriction enzyme and methyltransferase RM.BcgI.